The chain runs to 199 residues: Gamma-glutamylcyclotransferase 2-3 (199 aa).

5-10 (VFGYGS) serves as a coordination point for substrate. Glu86 serves as the catalytic Proton acceptor.

The protein belongs to the gamma-glutamylcyclotransferase family. Mn(2+) serves as cofactor.

Its subcellular location is the cytoplasm. The catalysed reaction is glutathione = L-cysteinylglycine + 5-oxo-L-proline. In terms of biological role, converts GSH to 5-oxoproline and cysteine-glycine (Cys-Gly) dipeptide in vitro and plays a significant role in glutathione (GSH) homeostasis. Has no activity towards gamma-glutamyl-L-cysteine but possesses very low activity towards gamma-glutamyl-L-alanine. This is Gamma-glutamylcyclotransferase 2-3 from Arabidopsis thaliana (Mouse-ear cress).